The primary structure comprises 597 residues: Arginine--tRNA ligase (597 aa).

The 'HIGH' region motif lies at 138–148 (ANPTGPMHVGH).

It belongs to the class-I aminoacyl-tRNA synthetase family. Monomer.

The protein resides in the cytoplasm. The enzyme catalyses tRNA(Arg) + L-arginine + ATP = L-arginyl-tRNA(Arg) + AMP + diphosphate. The polypeptide is Arginine--tRNA ligase (Rhodopseudomonas palustris (strain ATCC BAA-98 / CGA009)).